A 530-amino-acid polypeptide reads, in one-letter code: GH3 domain-containing protein (530 aa).

A signal peptide spans 1-17; it reads MLLWPLLLLLLLLPTLA. Positions 99–122 are disordered; the sequence is LTKASQTQQEDSGEQPLPPTSNQD. Asn450 carries N-linked (GlcNAc...) asparagine glycosylation. At Gln489 the chain carries N5-methylglutamine.

The protein belongs to the GH3 family. Post-translationally, methylated at Gln-489 by N6AMT1.

Its subcellular location is the endoplasmic reticulum. The protein resides in the nucleus envelope. The chain is GH3 domain-containing protein (GHDC) from Homo sapiens (Human).